The primary structure comprises 176 residues: Warthog protein 5 (176 aa).

Residues Met1–Ala21 form the signal peptide. Residue Asn70 is glycosylated (N-linked (GlcNAc...) asparagine).

As to expression, expressed in seam cells, excretory cell, reproductive system, pharynx, pharyngeal-intestinal valve cells, neurons and neuronal support cells.

The protein resides in the secreted. In terms of biological role, intercellular signal essential for a variety of patterning events during development. This is Warthog protein 5 (wrt-5) from Caenorhabditis elegans.